The chain runs to 289 residues: MLRDLFVKKKKYAAIPSEQVRKDVPDGVMTKCPKCKKIMYTKELLKNLKVCVNCGYHHPMNAWERLDSILDEGSFREYDKEMVSLNPLEFPDYEEKLESDRKKTDLNEAVVTGEGTIDDMLVVVAVMDSRFRMGSMGSVVGEKIARAVEKAYDLQVPFIIFTASGGARMQEGILSLMQMAKTSVALKKHSNAGGLFISVMTHPTTGGVSASFASLGDYNLAEPGALIGFAGRRVIEQTVREKLPEDFQTAEFLLEHGQLDAVVHRDDMRESLRKILEVHQGGEMAVWQS.

A CoA carboxyltransferase N-terminal domain is found at 28–289 (VMTKCPKCKK…QGGEMAVWQS (262 aa)). 4 residues coordinate Zn(2+): cysteine 32, cysteine 35, cysteine 51, and cysteine 54. The C4-type zinc finger occupies 32–54 (CPKCKKIMYTKELLKNLKVCVNC).

Belongs to the AccD/PCCB family. As to quaternary structure, acetyl-CoA carboxylase is a heterohexamer composed of biotin carboxyl carrier protein (AccB), biotin carboxylase (AccC) and two subunits each of ACCase subunit alpha (AccA) and ACCase subunit beta (AccD). Requires Zn(2+) as cofactor.

It localises to the cytoplasm. It catalyses the reaction N(6)-carboxybiotinyl-L-lysyl-[protein] + acetyl-CoA = N(6)-biotinyl-L-lysyl-[protein] + malonyl-CoA. Its pathway is lipid metabolism; malonyl-CoA biosynthesis; malonyl-CoA from acetyl-CoA: step 1/1. Functionally, component of the acetyl coenzyme A carboxylase (ACC) complex. Biotin carboxylase (BC) catalyzes the carboxylation of biotin on its carrier protein (BCCP) and then the CO(2) group is transferred by the transcarboxylase to acetyl-CoA to form malonyl-CoA. The chain is Acetyl-coenzyme A carboxylase carboxyl transferase subunit beta from Bacillus cereus (strain AH187).